A 969-amino-acid chain; its full sequence is Aspartic protease 5 (969 aa).

An N-terminal signal peptide occupies residues 1 to 22; that stretch reads MEAGAMGGSSFLSFSSGPSAET. Low complexity predominate over residues 1–45; that stretch reads MEAGAMGGSSFLSFSSGPSAETSPSSLSPPTSSSPSPSPQLVSDS. 5 disordered regions span residues 1–65, 79–104, 128–149, 173–193, and 311–382; these read MEAG…SSRT, ENEA…AGHL, SSAT…RSSS, SSSS…SACG, and FLSL…DLPR. The Lumenal segment spans residues 23 to 820; it reads SPSSLSPPTS…PEGLPLSPQQ (798 aa). A compositionally biased stretch (low complexity) spans 311-324; sequence FLSLSSSPRSLASD. The span at 335-355 shows a compositional bias: basic and acidic residues; the sequence is QSREQRGEREGERQRPDKGEE. The 346-residue stretch at 413 to 758 folds into the Peptidase A1 domain; sequence YFLDILVGTP…DREQDRVGFA (346 aa). Aspartate 431 is a catalytic residue. Residues 608–635 form a disordered region; the sequence is PPESESTPATEALRPVAGESASRRISEK. The active site involves aspartate 682. The segment at 768–794 is disordered; the sequence is DQRPRGPDSGDGPKGRPTAPFTVPPLR. Over residues 769–781 the composition is skewed to basic and acidic residues; it reads QRPRGPDSGDGPK. Residues 821–841 form a helical membrane-spanning segment; it reads LWVAAALVVVAILIAVTVILL. The Cytoplasmic portion of the chain corresponds to 842–969; the sequence is HTIKRPSRSS…TLLDLPLGGE (128 aa). The interval 922 to 969 is disordered; the sequence is EDDGDFFGDDSVPSAEEQETAPSLSLREESSPFSASQSTLLDLPLGGE. Polar residues predominate over residues 952 to 961; it reads SPFSASQSTL.

The protein belongs to the peptidase A1 family. May be auto-cleaved to produce a 55 kDa form.

The protein resides in the golgi apparatus membrane. In tachyzoites, plays an essential role in the export of several dense granule proteins into the host cell by cleaving the localization motif RRLxx (termed Toxoplasma export element (TEXEL)) located downstream of the N-terminal secretory signal sequence. However, can also regulate the export of proteins that lack the TEXEL motif, such as GRA24. Requires Arg at P3 and P2, and Leu at P1 in the substrate TEXEL motif and, specifically, cleaves after Leu. Cleaves GRA16; proteolytic cleavage is essential for the correct trafficking of GRA16 from the parasite into the infected host nucleus. Cleaves GRA19 and GRA20. Cleaves MYR1. Cleaves LCAT, GRA44, GRA46, GRA46, ROP35/WNG1 and ROP34/WNG2. By regulating the export of dense granule proteins into the host cell, regulates multiple processes during tachyzoite infection of host cells, including recruitment of host mitochondria to the parasitophorous vacuole (PV), formation of the nanotubular network (NTN) or intravacuolar network (IVN) which are membranous tubules that bud from the PV membrane into the vacuolar lumen and, up-regulation of host cell genes to facilitate the parasite infection and modulate the host innate immune response. At the bradyzoite stage, also involved in the formation of the cyst wall. This is Aspartic protease 5 from Toxoplasma gondii.